Consider the following 420-residue polypeptide: Gamma-glutamyl phosphate reductase (420 aa).

The protein belongs to the gamma-glutamyl phosphate reductase family.

It is found in the cytoplasm. The catalysed reaction is L-glutamate 5-semialdehyde + phosphate + NADP(+) = L-glutamyl 5-phosphate + NADPH + H(+). It participates in amino-acid biosynthesis; L-proline biosynthesis; L-glutamate 5-semialdehyde from L-glutamate: step 2/2. Functionally, catalyzes the NADPH-dependent reduction of L-glutamate 5-phosphate into L-glutamate 5-semialdehyde and phosphate. The product spontaneously undergoes cyclization to form 1-pyrroline-5-carboxylate. The sequence is that of Gamma-glutamyl phosphate reductase from Cereibacter sphaeroides (strain ATCC 17023 / DSM 158 / JCM 6121 / CCUG 31486 / LMG 2827 / NBRC 12203 / NCIMB 8253 / ATH 2.4.1.) (Rhodobacter sphaeroides).